We begin with the raw amino-acid sequence, 288 residues long: Acetylglutamate kinase (288 aa).

Residues 66–67 (GG), Arg88, and Asn182 contribute to the substrate site.

It belongs to the acetylglutamate kinase family. ArgB subfamily.

The protein localises to the cytoplasm. The enzyme catalyses N-acetyl-L-glutamate + ATP = N-acetyl-L-glutamyl 5-phosphate + ADP. It participates in amino-acid biosynthesis; L-arginine biosynthesis; N(2)-acetyl-L-ornithine from L-glutamate: step 2/4. In terms of biological role, catalyzes the ATP-dependent phosphorylation of N-acetyl-L-glutamate. This chain is Acetylglutamate kinase, found in Brachyspira hyodysenteriae (strain ATCC 49526 / WA1).